Here is a 279-residue protein sequence, read N- to C-terminus: Undecaprenyl-diphosphatase (279 aa).

A run of 6 helical transmembrane segments spans residues 45 to 65 (FVEM…IVIY), 85 to 105 (WQLW…ALPF), 113 to 133 (FNFM…FIWV), 188 to 208 (SVAA…YSGL), 226 to 246 (LILL…IRFL), and 255 to 275 (FTIF…YWLV).

Belongs to the UppP family.

The protein resides in the cell membrane. It carries out the reaction di-trans,octa-cis-undecaprenyl diphosphate + H2O = di-trans,octa-cis-undecaprenyl phosphate + phosphate + H(+). Its function is as follows. Catalyzes the dephosphorylation of undecaprenyl diphosphate (UPP). Confers resistance to bacitracin. This chain is Undecaprenyl-diphosphatase, found in Streptococcus agalactiae serotype Ia (strain ATCC 27591 / A909 / CDC SS700).